We begin with the raw amino-acid sequence, 209 residues long: MEFVTALADLRAEASCPICLDYLKDPVTISCGHNFCLSCIIMSWKDLHDSFPCPFCHFCCPERKFISNPQLGSLTEIAKQLQIRSKKRKRQEEKHVCKKHNQVLTFFCQKDLELLCPRCSLSTDHQHHCVWPIKKAASYHRKKLEEYNAPWKERVELIEKVITMQTRKSLELKKKMESPSVTRLECSCTISAHFNLRLPGSSDSSASGS.

Residues 16 to 57 form an RING-type zinc finger; sequence CPICLDYLKDPVTISCGHNFCLSCIIMSWKDLHDSFPCPFCH. The segment at 92-133 adopts a B box-type zinc-finger fold; it reads EEKHVCKKHNQVLTFFCQKDLELLCPRCSLSTDHQHHCVWPI. Positions 97, 100, 119, and 125 each coordinate Zn(2+).

This is Putative tripartite motif-containing protein 61 (TRIM61) from Homo sapiens (Human).